Here is a 319-residue protein sequence, read N- to C-terminus: ATP-dependent 6-phosphofructokinase (319 aa).

ATP is bound at residue G11. 21 to 25 (RAVVR) is a binding site for ADP. ATP-binding positions include 72–73 (RC) and 102–105 (GDGS). Mg(2+) is bound at residue D103. Residue 125–127 (TID) participates in substrate binding. D127 functions as the Proton acceptor in the catalytic mechanism. Position 154 (R154) interacts with ADP. Substrate is bound by residues R162 and 169-171 (MGR). ADP-binding positions include 185-187 (GAE), R211, and 213-215 (KKH). Residues E222, R243, and 249–252 (HVQR) contribute to the substrate site.

Belongs to the phosphofructokinase type A (PFKA) family. ATP-dependent PFK group I subfamily. Prokaryotic clade 'B1' sub-subfamily. As to quaternary structure, homotetramer. The cofactor is Mg(2+).

Its subcellular location is the cytoplasm. The catalysed reaction is beta-D-fructose 6-phosphate + ATP = beta-D-fructose 1,6-bisphosphate + ADP + H(+). It functions in the pathway carbohydrate degradation; glycolysis; D-glyceraldehyde 3-phosphate and glycerone phosphate from D-glucose: step 3/4. Allosterically activated by ADP and other diphosphonucleosides, and allosterically inhibited by phosphoenolpyruvate. Functionally, catalyzes the phosphorylation of D-fructose 6-phosphate to fructose 1,6-bisphosphate by ATP, the first committing step of glycolysis. The polypeptide is ATP-dependent 6-phosphofructokinase (Geobacillus sp. (strain WCH70)).